Here is a 609-residue protein sequence, read N- to C-terminus: Pogo transposable element with KRAB domain (609 aa).

2 disordered regions span residues M1 to D28 and E100 to K127. A coiled-coil region spans residues L8 to D28. K13 is covalently cross-linked (Glycyl lysine isopeptide (Lys-Gly) (interchain with G-Cter in SUMO2)). In terms of domain architecture, KRAB spans A47 to S118. The segment covering S108–A119 has biased composition (polar residues). Positions A250–H323 constitute an HTH CENPB-type domain. In terms of domain architecture, DDE-1 spans H353 to F567. A Glycyl lysine isopeptide (Lys-Gly) (interchain with G-Cter in SUMO2) cross-link involves residue K384. Residues S588–N609 form a disordered region.

The protein localises to the nucleus. This chain is Pogo transposable element with KRAB domain (POGK), found in Homo sapiens (Human).